Here is a 436-residue protein sequence, read N- to C-terminus: Gamma-glutamyl phosphate reductase (436 aa).

This sequence belongs to the gamma-glutamyl phosphate reductase family.

It is found in the cytoplasm. The enzyme catalyses L-glutamate 5-semialdehyde + phosphate + NADP(+) = L-glutamyl 5-phosphate + NADPH + H(+). Its pathway is amino-acid biosynthesis; L-proline biosynthesis; L-glutamate 5-semialdehyde from L-glutamate: step 2/2. In terms of biological role, catalyzes the NADPH-dependent reduction of L-glutamate 5-phosphate into L-glutamate 5-semialdehyde and phosphate. The product spontaneously undergoes cyclization to form 1-pyrroline-5-carboxylate. In Polaromonas sp. (strain JS666 / ATCC BAA-500), this protein is Gamma-glutamyl phosphate reductase.